Here is a 478-residue protein sequence, read N- to C-terminus: MSGKIMFGTARSFTLALYDVRVRRLCMRNYSREWAPSSAAETTDADRLGHPQNVTAEADKMRKALILIENTRTNGRSYVEAVRRLRLHPIILAADPALYDYVAAERIEVARVDTTNLDALIGEYSRLGKSFDIAGVTSAAESFYATVGKICRNFNLPGPDPESIEQCCNKAAQRQVLAAAGVPVPGYRSATTAAEVQCVAAEIGLPAVLKPAVGSGSRGVRLCRDARELAEHTDYLLGGKHMWRSSPEVLVEQFVDGPHYIAEIMGDEVIGIGITEYGPPPHFVFRQLTFPAPLTDEQYERAVDVVQRCLRALGLGWGPTNIEFRWTEVGPVVIEVNPRLAGNPDPQLVQLAFDVDLIGEHIKLAIGEQCNLSKRQSRTATARSLIADRDGTLDYIDGIDRAAAIPGVADVKLYVRPGTPIVRNGDYCDRIGYVVAVAPSRSSADTIIQRAVESIDWSISPFSDLHDQEQYTPLYFPD.

The region spanning 174–366 (RQVLAAAGVP…LIGEHIKLAI (193 aa)) is the ATP-grasp domain. 214-219 (GSGSRG) is an ATP binding site. R339 is a catalytic residue.

This is an uncharacterized protein from Sinorhizobium fredii (strain NBRC 101917 / NGR234).